A 228-amino-acid polypeptide reads, in one-letter code: uncharacterized protein (228 aa).

Helical transmembrane passes span 37–54 (WCMHASLTLVLLALTLIV), 67–89 (VVSIYLAFFFSLKILHTFFSTGV), 104–126 (HIGIRLFLLLCASSLFYACTSRL), and 138–160 (VLHVRSTAYTTPCAVYVMMLVLY).

It is found in the cell membrane. This is an uncharacterized protein from Treponema pallidum (strain Nichols).